We begin with the raw amino-acid sequence, 133 residues long: Small ribosomal subunit protein uS8 (133 aa).

This sequence belongs to the universal ribosomal protein uS8 family. As to quaternary structure, part of the 30S ribosomal subunit. Contacts proteins S5 and S12.

Functionally, one of the primary rRNA binding proteins, it binds directly to 16S rRNA central domain where it helps coordinate assembly of the platform of the 30S subunit. This Protochlamydia amoebophila (strain UWE25) protein is Small ribosomal subunit protein uS8.